The primary structure comprises 644 residues: Cell pattern formation-associated protein StuA (644 aa).

Low complexity predominate over residues Ala-18–His-33. Disordered stretches follow at residues Ala-18–Pro-58 and Gln-86–Gly-120. The span at Pro-38 to Gln-47 shows a compositional bias: polar residues. The span at Leu-87–Ser-104 shows a compositional bias: low complexity. In terms of domain architecture, HTH APSES-type spans Arg-124–Pro-230. The H-T-H motif DNA-binding region spans Gly-158–Glu-179. Positions Gly-239–Arg-644 are disordered. Positions Ser-253–Pro-269 are enriched in polar residues. The span at Ser-315–Ser-328 shows a compositional bias: low complexity. Composition is skewed to polar residues over residues Ala-334–Val-357, Gln-371–Asn-383, and Pro-395–Ser-404. The segment covering Glu-456–Tyr-465 has biased composition (basic and acidic residues). Residues Gly-509–Gln-524 show a composition bias toward low complexity. A compositionally biased stretch (polar residues) spans Trp-525 to Asn-544. Positions Lys-584 to Lys-612 are nuclear localization domain. Polar residues predominate over residues His-635–Arg-644.

This sequence belongs to the EFG1/PHD1/stuA family.

The protein localises to the nucleus. In terms of biological role, transcription factor that regulates asexual reproduction. Binds the StuA-response elements (StRE) with the consensus sequence 5'-(A/T)CGCG(T/A)N(A/C)-3' at the promoters of target genes. Required for pathogenicity and positively regulates the synthesis of the mycotoxin alternariol. Acts as a positive regulator of Tox3 but is not required for the expression of ToxA. Also acts as a central regulator of carbon metabolism including glycolysis, the TCA cycle, and amino acid synthesis. The polypeptide is Cell pattern formation-associated protein StuA (Phaeosphaeria nodorum (strain SN15 / ATCC MYA-4574 / FGSC 10173) (Glume blotch fungus)).